The primary structure comprises 249 residues: Probable transcriptional regulatory protein Sfum_0996 (249 aa).

Belongs to the TACO1 family.

The protein resides in the cytoplasm. This is Probable transcriptional regulatory protein Sfum_0996 from Syntrophobacter fumaroxidans (strain DSM 10017 / MPOB).